A 380-amino-acid chain; its full sequence is Cytochrome b (380 aa).

Transmembrane regions (helical) follow at residues 33-53 (FGSL…FLAM), 77-98 (WFIR…YLHI), 113-133 (WTIG…GYVL), and 178-198 (FFTF…VHLL). Heme b is bound by residues histidine 83 and histidine 97. Positions 182 and 196 each coordinate heme b. Histidine 201 serves as a coordination point for a ubiquinone. 4 helical membrane passes run 226 to 246 (YKDL…ALFS), 288 to 308 (LGGV…PILH), 320 to 340 (LTQT…WIGG), and 347 to 367 (FVII…VLAP).

This sequence belongs to the cytochrome b family. The cytochrome bc1 complex contains 3 respiratory subunits (MT-CYB, CYC1 and UQCRFS1), 2 core proteins (UQCRC1 and UQCRC2) and probably 6 low-molecular weight proteins. Heme b is required as a cofactor.

It localises to the mitochondrion inner membrane. Component of the ubiquinol-cytochrome c reductase complex (complex III or cytochrome b-c1 complex) that is part of the mitochondrial respiratory chain. The b-c1 complex mediates electron transfer from ubiquinol to cytochrome c. Contributes to the generation of a proton gradient across the mitochondrial membrane that is then used for ATP synthesis. This is Cytochrome b (mt-cyb) from Lampris guttatus (Opah).